Reading from the N-terminus, the 421-residue chain is Ubiquitin-like modifier-activating enzyme 5 (421 aa).

Positions 89, 110, 133, 156, and 191 each coordinate ATP. Zn(2+) is bound by residues Cys233 and Cys236. The active-site Glycyl thioester intermediate is Cys257. Zn(2+) is bound by residues Cys310 and Cys315.

This sequence belongs to the ubiquitin-activating E1 family. UBA5 subfamily.

E1-like enzyme which activates UFM1. The polypeptide is Ubiquitin-like modifier-activating enzyme 5 (Oryza sativa subsp. japonica (Rice)).